The primary structure comprises 257 residues: NAD-capped RNA hydrolase NudC (257 aa).

Substrate-binding residues include Lys25 and Arg69. Zn(2+) is bound by residues Cys98 and Cys101. Glu111 serves as a coordination point for substrate. The Zn(2+) site is built by Cys116 and Cys119. Residue Tyr124 participates in substrate binding. A Nudix hydrolase domain is found at 125 to 248; the sequence is PQIAPCIIVA…TVARRLIEDT (124 aa). Residues Ala158, Glu174, and Glu178 each contribute to the a divalent metal cation site. Residues 159-180 carry the Nudix box motif; it reads GFVEVGETLEQAVAREVMEESG. 192–199 is a substrate binding site; sequence QPWPFPQS. Position 219 (Glu219) interacts with a divalent metal cation. Ala241 lines the substrate pocket.

It belongs to the Nudix hydrolase family. NudC subfamily. As to quaternary structure, homodimer. Mg(2+) is required as a cofactor. The cofactor is Mn(2+). Requires Zn(2+) as cofactor.

It carries out the reaction a 5'-end NAD(+)-phospho-ribonucleoside in mRNA + H2O = a 5'-end phospho-adenosine-phospho-ribonucleoside in mRNA + beta-nicotinamide D-ribonucleotide + 2 H(+). The enzyme catalyses NAD(+) + H2O = beta-nicotinamide D-ribonucleotide + AMP + 2 H(+). It catalyses the reaction NADH + H2O = reduced beta-nicotinamide D-ribonucleotide + AMP + 2 H(+). In terms of biological role, mRNA decapping enzyme that specifically removes the nicotinamide adenine dinucleotide (NAD) cap from a subset of mRNAs by hydrolyzing the diphosphate linkage to produce nicotinamide mononucleotide (NMN) and 5' monophosphate mRNA. The NAD-cap is present at the 5'-end of some mRNAs and stabilizes RNA against 5'-processing. Has preference for mRNAs with a 5'-end purine. Catalyzes the hydrolysis of a broad range of dinucleotide pyrophosphates. This Escherichia coli O127:H6 (strain E2348/69 / EPEC) protein is NAD-capped RNA hydrolase NudC.